The chain runs to 891 residues: Valine--tRNA ligase (891 aa).

Residues 43–53 carry the 'HIGH' region motif; it reads PFTSGTLHLGH. The 'KMSKS' region motif lies at 536 to 540; sequence KMSKS. Lysine 539 lines the ATP pocket.

Belongs to the class-I aminoacyl-tRNA synthetase family. ValS type 2 subfamily.

Its subcellular location is the cytoplasm. The enzyme catalyses tRNA(Val) + L-valine + ATP = L-valyl-tRNA(Val) + AMP + diphosphate. Catalyzes the attachment of valine to tRNA(Val). As ValRS can inadvertently accommodate and process structurally similar amino acids such as threonine, to avoid such errors, it has a 'posttransfer' editing activity that hydrolyzes mischarged Thr-tRNA(Val) in a tRNA-dependent manner. The protein is Valine--tRNA ligase of Pyrococcus furiosus (strain ATCC 43587 / DSM 3638 / JCM 8422 / Vc1).